The following is a 519-amino-acid chain: NADH dehydrogenase (519 aa).

Residues 1–183 form a membrane-binding region; the sequence is MVLEPQIKSQ…YLNGESFTSG (183 aa). The interval 184–519 is catalytic; the sequence is RMTVEEILAQ…TTPAESAAAK (336 aa). 210-241 provides a ligand contact to FAD; sequence DVLVVGGGPAGASSAIYAARKGIRTGIVADRF. A disulfide bond links cysteine 337 and cysteine 340. 349-379 provides a ligand contact to NAD(+); that stretch reads DVAVIGGGNSGVEAAIDLAGIVNHVTVLEFM. FAD is bound at residue 469–479; the sequence is TNVPGVFAAGD.

This sequence belongs to the class-II pyridine nucleotide-disulfide oxidoreductase family. In terms of assembly, homodimer. FAD serves as cofactor.

Its subcellular location is the cell membrane. It catalyses the reaction a ubiquinone + NADH + 5 H(+)(in) = a ubiquinol + NAD(+) + 4 H(+)(out). In terms of biological role, transfer of electrons from NADH to the respiratory chain. The immediate electron acceptor for the enzyme is believed to be ubiquinone. The protein is NADH dehydrogenase (ahpF) of Ferdinandcohnia aciditolerans (strain JCM 32973 / CCTCC AB 2017280 / YN-1) (Bacillus aciditolerans).